The chain runs to 746 residues: Exostosin-1 (746 aa).

The Cytoplasmic segment spans residues 1 to 5; that stretch reads MQAKK. A helical; Signal-anchor for type II membrane protein membrane pass occupies residues 6 to 26; sequence RYFILLSAGSCLALLFYFGGV. At 27 to 746 the chain is on the lumenal side; the sequence is QFRASRSHSR…RKKYRDIERL (720 aa). N-linked (GlcNAc...) asparagine glycosylation occurs at N89. Cystine bridges form between C98–C103 and C109–C152. Positions 166 and 203 each coordinate a protein. Residues K267, K269, Y271, and R280 each coordinate UDP. Cysteines 298 and 312 form a disulfide. Residue H300 participates in a protein binding. The UDP site is built by Y319 and Y324. An N-linked (GlcNAc...) asparagine glycan is attached at N330. Disulfide bonds link C334/C355 and C652/C704. UDP is bound by residues R346 and E349.

Belongs to the glycosyltransferase 47 family. In terms of assembly, part of the heparan sulfate polymerase, a dimeric complex composed of EXT1 and EXT2. Could also form homooligomeric complexes. Interacts with NDST1. In terms of processing, N-glycosylated.

It is found in the golgi apparatus membrane. The protein resides in the golgi apparatus. The protein localises to the cis-Golgi network membrane. Its subcellular location is the endoplasmic reticulum membrane. It catalyses the reaction 3-O-{alpha-D-GlcNAc-[(1-&gt;4)-beta-D-GlcA-(1-&gt;4)-alpha-D-GlcNAc](n)-(1-&gt;4)-beta-D-GlcA-(1-&gt;3)-beta-D-Gal-(1-&gt;3)-beta-D-Gal-(1-&gt;4)-beta-D-Xyl}-L-seryl-[protein] + UDP-alpha-D-glucuronate = 3-O-{[(1-&gt;4)-beta-D-GlcA-(1-&gt;4)-alpha-D-GlcNAc](n+1)-(1-&gt;4)-beta-D-GlcA-(1-&gt;3)-beta-D-Gal-(1-&gt;3)-beta-D-Gal-(1-&gt;4)-beta-D-Xyl}-L-seryl-[protein] + UDP + H(+). It participates in protein modification; protein glycosylation. Functionally, glycosyltransferase forming with EXT2 the heterodimeric heparan sulfate polymerase which catalyzes the elongation of the heparan sulfate glycan backbone. Glycan backbone extension consists in the alternating transfer of (1-&gt;4)-beta-D-GlcA and (1-&gt;4)-alpha-D-GlcNAc residues from their respective UDP-sugar donors. Both EXT1 and EXT2 are required for the full activity of the polymerase since EXT1 bears the N-acetylglucosaminyl-proteoglycan 4-beta-glucuronosyltransferase activity within the complex while EXT2 carries the glucuronosyl-N-acetylglucosaminyl-proteoglycan 4-alpha-N-acetylglucosaminyltransferase activity. Heparan sulfate proteoglycans are ubiquitous components of the extracellular matrix and play an important role in tissue homeostasis and signaling. The chain is Exostosin-1 from Cricetulus griseus (Chinese hamster).